The sequence spans 115 residues: U3-lycotoxin-Ls1o (115 aa).

The N-terminal stretch at 1–20 (MKFVLLFGVLLVTLFSYSSA) is a signal peptide. The propeptide occupies 21 to 44 (EMLDDFDQADEDELLSLIEKEEAR). Disulfide bonds link Cys48–Cys63, Cys55–Cys72, Cys62–Cys87, and Cys74–Cys85.

This sequence belongs to the neurotoxin 19 (CSTX) family. 01 subfamily. In terms of tissue distribution, expressed by the venom gland.

The protein localises to the secreted. The sequence is that of U3-lycotoxin-Ls1o from Lycosa singoriensis (Wolf spider).